The chain runs to 204 residues: Ribosomal RNA small subunit methyltransferase G (204 aa).

3 residues coordinate S-adenosyl-L-methionine: G73, F78, and R139.

This sequence belongs to the methyltransferase superfamily. RNA methyltransferase RsmG family.

The protein localises to the cytoplasm. The enzyme catalyses guanosine(527) in 16S rRNA + S-adenosyl-L-methionine = N(7)-methylguanosine(527) in 16S rRNA + S-adenosyl-L-homocysteine. Functionally, specifically methylates the N7 position of guanine in position 527 of 16S rRNA. In Coxiella burnetii (strain CbuG_Q212) (Coxiella burnetii (strain Q212)), this protein is Ribosomal RNA small subunit methyltransferase G.